We begin with the raw amino-acid sequence, 405 residues long: MEEIKLNTIEEALEDFKEGKFLIVVDDEDRENEGDFIIAAEKITPDKVNFMMHHGRGVLCAPISEERAHELELEMQVPDNTSVHETPFTVTVDRLGNGCTTGVSMYDRAQTILALADPNTRPSDLGRPGHICPLRARSRGVLRRAGHTEAAVDLARLCGMQPAAALIEIINEDGTMARLPQLWEVSKRFGLKIIAIKDLIAYRLKQESIVEKGVEVDMPTEYGHFRLIPFRQKSNGLEHIALFKGTWDENEPILVRMHSSCATGDIFGSMRCDCGGQLLQAMEKIEKEGKGAIIYLNQEGRGIGLMEKMKAYKLQEQGMDTIDANLCLGHKADERDYGIGAQILRLLGIKKMRLMTNNPVKRIGLEAFGLEIVENIPLETAPNRYNEFYLRTKKERMGHELHNIK.

The tract at residues 1-205 (MEEIKLNTIE…IKDLIAYRLK (205 aa)) is DHBP synthase. D-ribulose 5-phosphate-binding positions include 30 to 31 (RE), Asp35, 144 to 148 (RAGHT), and Glu168. Glu31 serves as a coordination point for Mg(2+). Residue His147 coordinates Mg(2+). Residues 206 to 405 (QESIVEKGVE…RMGHELHNIK (200 aa)) are GTP cyclohydrolase II. 256 to 260 (RMHSS) lines the GTP pocket. Zn(2+) is bound by residues Cys261, Cys272, and Cys274. GTP-binding positions include Gln277, 299–301 (EGR), and Thr321. Residue Asp333 is the Proton acceptor; for GTP cyclohydrolase activity of the active site. The active-site Nucleophile; for GTP cyclohydrolase activity is the Arg335. Residues Thr356 and Lys361 each coordinate GTP.

This sequence in the N-terminal section; belongs to the DHBP synthase family. In the C-terminal section; belongs to the GTP cyclohydrolase II family. Mg(2+) is required as a cofactor. The cofactor is Mn(2+). Zn(2+) serves as cofactor.

The catalysed reaction is D-ribulose 5-phosphate = (2S)-2-hydroxy-3-oxobutyl phosphate + formate + H(+). It catalyses the reaction GTP + 4 H2O = 2,5-diamino-6-hydroxy-4-(5-phosphoribosylamino)-pyrimidine + formate + 2 phosphate + 3 H(+). Its pathway is cofactor biosynthesis; riboflavin biosynthesis; 2-hydroxy-3-oxobutyl phosphate from D-ribulose 5-phosphate: step 1/1. It participates in cofactor biosynthesis; riboflavin biosynthesis; 5-amino-6-(D-ribitylamino)uracil from GTP: step 1/4. Its function is as follows. Catalyzes the conversion of D-ribulose 5-phosphate to formate and 3,4-dihydroxy-2-butanone 4-phosphate. Catalyzes the conversion of GTP to 2,5-diamino-6-ribosylamino-4(3H)-pyrimidinone 5'-phosphate (DARP), formate and pyrophosphate. The polypeptide is Riboflavin biosynthesis protein RibBA (Porphyromonas gingivalis (strain ATCC 33277 / DSM 20709 / CIP 103683 / JCM 12257 / NCTC 11834 / 2561)).